The chain runs to 267 residues: Dihydropteroate synthase (267 aa).

The Pterin-binding domain occupies 1 to 251 (MTKTKIMGIL…NVELNAKLAK (251 aa)). Mg(2+) is bound at residue N11. Residues T51, D84, N103, D167, K203, and 239–241 (RVH) contribute to the (7,8-dihydropterin-6-yl)methyl diphosphate site.

This sequence belongs to the DHPS family. In terms of assembly, homodimer. Requires Mg(2+) as cofactor.

It carries out the reaction (7,8-dihydropterin-6-yl)methyl diphosphate + 4-aminobenzoate = 7,8-dihydropteroate + diphosphate. Its pathway is cofactor biosynthesis; tetrahydrofolate biosynthesis; 7,8-dihydrofolate from 2-amino-4-hydroxy-6-hydroxymethyl-7,8-dihydropteridine diphosphate and 4-aminobenzoate: step 1/2. In terms of biological role, catalyzes the condensation of para-aminobenzoate (pABA) with 6-hydroxymethyl-7,8-dihydropterin diphosphate (DHPt-PP) to form 7,8-dihydropteroate (H2Pte), the immediate precursor of folate derivatives. The sequence is that of Dihydropteroate synthase (folP) from Staphylococcus aureus (strain MW2).